Consider the following 170-residue polypeptide: Shikimate kinase (170 aa).

Residue 11–16 coordinates ATP; that stretch reads LSGKST. Mg(2+) is bound at residue Ser15. Residues Asp33, Arg57, and Gly79 each coordinate substrate. Arg119 contributes to the ATP binding site. Arg137 is a binding site for substrate.

It belongs to the shikimate kinase family. In terms of assembly, monomer. Mg(2+) serves as cofactor.

It localises to the cytoplasm. It carries out the reaction shikimate + ATP = 3-phosphoshikimate + ADP + H(+). Its pathway is metabolic intermediate biosynthesis; chorismate biosynthesis; chorismate from D-erythrose 4-phosphate and phosphoenolpyruvate: step 5/7. Catalyzes the specific phosphorylation of the 3-hydroxyl group of shikimic acid using ATP as a cosubstrate. The polypeptide is Shikimate kinase (Clostridium botulinum (strain Loch Maree / Type A3)).